A 266-amino-acid chain; its full sequence is Dolichol-phosphate mannosyltransferase subunit 1 (266 aa).

Positions 1–19 (MASPGASRGASAATAAAAS) are enriched in low complexity. A disordered region spans residues 1-31 (MASPGASRGASAATAAAASPRPPQGRSSRRD). An N-acetylalanine modification is found at A2. S3 is modified (phosphoserine). Residues P38, Y40, E42, I69, D71, D124, A125, D126, R153, R240, and K246 each coordinate GDP-alpha-D-mannose. A Mg(2+)-binding site is contributed by D126. D126 is a binding site for Mn(2+).

This sequence belongs to the glycosyltransferase 2 family. As to quaternary structure, component of the dolichol-phosphate mannose (DPM) synthase complex composed of DPM1, DPM2 and DPM3; within the complex, directly interacts with DPM3. This interaction may stabilize DPM1. It depends on Mg(2+) as a cofactor. Mn(2+) is required as a cofactor. The cofactor is Ca(2+).

The protein localises to the endoplasmic reticulum. The catalysed reaction is a di-trans,poly-cis-dolichyl phosphate + GDP-alpha-D-mannose = a di-trans,poly-cis-dolichyl beta-D-mannosyl phosphate + GDP. Its pathway is protein modification; protein glycosylation. Functionally, transfers mannose from GDP-mannose to dolichol monophosphate to form dolichol phosphate mannose (Dol-P-Man) which is the mannosyl donor in pathways leading to N-glycosylation, glycosyl phosphatidylinositol membrane anchoring, and O-mannosylation of proteins; catalytic subunit of the dolichol-phosphate mannose (DPM) synthase complex. The polypeptide is Dolichol-phosphate mannosyltransferase subunit 1 (DPM1) (Cricetulus griseus (Chinese hamster)).